A 231-amino-acid polypeptide reads, in one-letter code: MTKTGYINAAFRSSQNNEAYLFINDKYVLLDYAPGTSNDKVLYGPTPVRDGFKSLNQTVFGSYGVDCSFDTDNDEAFIFYEKFCALIDYAPHSNKDKIILGPKKIADMFPFFEGTVFENGIDAAYRSTRGKEVYLFKGDQYARIDYETNSMVNKEIKSIRNGFPCFRNTIFESGTDAAFASHKTNEVYFFKGDYYARVTVTPGATDDQIMDGVRKTLDYWPSLRGIIPLEN.

Hemopexin repeat units lie at residues 4–55 (TGYI…FKSL), 62–112 (SYGV…FPFF), 118–166 (ENGI…FPCF), and 172–223 (ESGT…WPSL). Positions 8, 66, 122, and 176 each coordinate Ca(2+).

As to quaternary structure, monomer and homodimer.

It localises to the cytoplasm. The protein localises to the cytosol. In terms of biological role, may play a role in response to oxidative stress and polyamine biosynthesis. The chain is Albumin-2 from Pisum sativum (Garden pea).